The following is an 888-amino-acid chain: Phosphoenolpyruvate carboxylase (888 aa).

Catalysis depends on residues histidine 144 and lysine 553.

Belongs to the PEPCase type 1 family. The cofactor is Mg(2+).

It catalyses the reaction oxaloacetate + phosphate = phosphoenolpyruvate + hydrogencarbonate. Functionally, forms oxaloacetate, a four-carbon dicarboxylic acid source for the tricarboxylic acid cycle. This is Phosphoenolpyruvate carboxylase from Alcanivorax borkumensis (strain ATCC 700651 / DSM 11573 / NCIMB 13689 / SK2).